The chain runs to 153 residues: Small ribosomal subunit protein uS19A (153 aa).

This sequence belongs to the universal ribosomal protein uS19 family. As to quaternary structure, component of the small ribosomal subunit (SSU). Mature yeast ribosomes consist of a small (40S) and a large (60S) subunit. The 40S small subunit contains 1 molecule of ribosomal RNA (18S rRNA) and at least 33 different proteins. The large 60S subunit contains 3 rRNA molecules (25S, 5.8S and 5S rRNA) and at least 46 different proteins.

It localises to the cytoplasm. The protein localises to the nucleus. It is found in the nucleolus. Component of the ribosome, a large ribonucleoprotein complex responsible for the synthesis of proteins in the cell. The small ribosomal subunit (SSU) binds messenger RNAs (mRNAs) and translates the encoded message by selecting cognate aminoacyl-transfer RNA (tRNA) molecules. The large subunit (LSU) contains the ribosomal catalytic site termed the peptidyl transferase center (PTC), which catalyzes the formation of peptide bonds, thereby polymerizing the amino acids delivered by tRNAs into a polypeptide chain. The nascent polypeptides leave the ribosome through a tunnel in the LSU and interact with protein factors that function in enzymatic processing, targeting, and the membrane insertion of nascent chains at the exit of the ribosomal tunnel. uS19 is involved in the nuclear export of the small ribosomal subunit precursor. Has a role in the late stage of the assembly of pre-40S particles within the nucleus and controls their export to the cytoplasm. The chain is Small ribosomal subunit protein uS19A (rps1501) from Schizosaccharomyces pombe (strain 972 / ATCC 24843) (Fission yeast).